A 153-amino-acid polypeptide reads, in one-letter code: Deoxyuridine 5'-triphosphate nucleotidohydrolase (153 aa).

Residues Ser75, Gly88, Asp91, Tyr94, Lys99, Arg143, Phe148, and Gly149 each coordinate dUMP.

This sequence belongs to the dUTPase family. Homotrimer. Mg(2+) serves as cofactor.

The catalysed reaction is dUTP + H2O = dUMP + diphosphate + H(+). Its pathway is pyrimidine metabolism; dUMP biosynthesis; dUMP from dCTP (dUTP route): step 2/2. In terms of biological role, involved in nucleotide metabolism via production of dUMP, the immediate precursor of thymidine nucleotides, and decreases the intracellular concentration of dUTP so that uracil cannot be incorporated into DNA. This Eremothecium gossypii (strain ATCC 10895 / CBS 109.51 / FGSC 9923 / NRRL Y-1056) (Yeast) protein is Deoxyuridine 5'-triphosphate nucleotidohydrolase (DUT1).